Consider the following 173-residue polypeptide: NADH-ubiquinone oxidoreductase chain 6 (173 aa).

Transmembrane regions (helical) follow at residues 1–21 (MVYF…AVAS), 25–45 (PYFA…LLVG), 53–73 (LVLF…TAAL), 82–102 (WGDW…FFVG), and 141–161 (GIML…ILEL).

It belongs to the complex I subunit 6 family.

Its subcellular location is the mitochondrion membrane. It catalyses the reaction a ubiquinone + NADH + 5 H(+)(in) = a ubiquinol + NAD(+) + 4 H(+)(out). In terms of biological role, core subunit of the mitochondrial membrane respiratory chain NADH dehydrogenase (Complex I) that is believed to belong to the minimal assembly required for catalysis. Complex I functions in the transfer of electrons from NADH to the respiratory chain. The immediate electron acceptor for the enzyme is believed to be ubiquinone. The sequence is that of NADH-ubiquinone oxidoreductase chain 6 (MT-ND6) from Squalus acanthias (Spiny dogfish).